We begin with the raw amino-acid sequence, 245 residues long: Sugar fermentation stimulation protein homolog (245 aa).

The protein belongs to the SfsA family.

The sequence is that of Sugar fermentation stimulation protein homolog from Yersinia pseudotuberculosis serotype I (strain IP32953).